An 805-amino-acid polypeptide reads, in one-letter code: Rho GTPase-activating protein 42 (805 aa).

The region spanning 7–262 (EFSDSFLDSP…IRSAEQDFKA (256 aa)) is the BAR domain. The stretch at 225 to 262 (KQQLQFNLQNTRNNFESTRQEVENLMRRIRSAEQDFKA) forms a coiled coil. One can recognise a PH domain in the interval 265-374 (QWTMEGFLYV…WMEAMDGKEP (110 aa)). Residues 376–572 (YTLPALLSKK…ILIENYDKIF (197 aa)) enclose the Rho-GAP domain. Disordered regions lie at residues 576-600 (PDPN…RSKA), 625-725 (SDTF…SELL), and 765-805 (VSRS…PGSV). The segment covering 626-654 (DTFSSSPSSTPMGSMESLSSHSSEQNSCS) has biased composition (low complexity). Residues 670 to 693 (LCWTTPSPSTNGPKSPACTTSPDS) are compositionally biased toward polar residues. Over residues 694-704 (SSKEDANKTDG) the composition is skewed to basic and acidic residues. Over residues 710-721 (LSTSPGDRSSPA) the composition is skewed to polar residues. Basic and acidic residues predominate over residues 782–793 (PPKDGMRFRDDS).

May influence blood pressure by functioning as a GTPase-activating protein in vascular smooth muscle. This Danio rerio (Zebrafish) protein is Rho GTPase-activating protein 42.